A 691-amino-acid polypeptide reads, in one-letter code: Elongation factor G (691 aa).

Residues 6–281 (SRYRNIGIMA…GVVDFLPSPI (276 aa)) enclose the tr-type G domain. GTP contacts are provided by residues 15–22 (AHIDAGKT), 79–83 (DTPGH), and 133–136 (NKMD).

It belongs to the TRAFAC class translation factor GTPase superfamily. Classic translation factor GTPase family. EF-G/EF-2 subfamily.

It localises to the cytoplasm. Its function is as follows. Catalyzes the GTP-dependent ribosomal translocation step during translation elongation. During this step, the ribosome changes from the pre-translocational (PRE) to the post-translocational (POST) state as the newly formed A-site-bound peptidyl-tRNA and P-site-bound deacylated tRNA move to the P and E sites, respectively. Catalyzes the coordinated movement of the two tRNA molecules, the mRNA and conformational changes in the ribosome. The chain is Elongation factor G from Wolbachia pipientis subsp. Culex pipiens (strain wPip).